Here is a 206-residue protein sequence, read N- to C-terminus: Octanoyltransferase (206 aa).

One can recognise a BPL/LPL catalytic domain in the interval 30–206 (PETNDEIWLV…EFVTLLNNSI (177 aa)). Substrate-binding positions include 69–76 (RGGQVTYH), 137–139 (SLG), and 150–152 (GIA). The Acyl-thioester intermediate role is filled by Cys168.

The protein belongs to the LipB family.

Its subcellular location is the cytoplasm. It carries out the reaction octanoyl-[ACP] + L-lysyl-[protein] = N(6)-octanoyl-L-lysyl-[protein] + holo-[ACP] + H(+). It functions in the pathway protein modification; protein lipoylation via endogenous pathway; protein N(6)-(lipoyl)lysine from octanoyl-[acyl-carrier-protein]: step 1/2. Its function is as follows. Catalyzes the transfer of endogenously produced octanoic acid from octanoyl-acyl-carrier-protein onto the lipoyl domains of lipoate-dependent enzymes. Lipoyl-ACP can also act as a substrate although octanoyl-ACP is likely to be the physiological substrate. This is Octanoyltransferase from Francisella tularensis subsp. holarctica (strain FTNF002-00 / FTA).